A 270-amino-acid chain; its full sequence is Acyl-[acyl-carrier-protein]--UDP-N-acetylglucosamine O-acyltransferase (270 aa).

Residues 69 to 72 (QDLK), His121, His140, and Gln157 contribute to the substrate site.

This sequence belongs to the transferase hexapeptide repeat family. LpxA subfamily. As to quaternary structure, homotrimer.

Its subcellular location is the cytoplasm. It catalyses the reaction a (3R)-hydroxyacyl-[ACP] + UDP-N-acetyl-alpha-D-glucosamine = a UDP-3-O-[(3R)-3-hydroxyacyl]-N-acetyl-alpha-D-glucosamine + holo-[ACP]. It participates in glycolipid biosynthesis; lipid IV(A) biosynthesis; lipid IV(A) from (3R)-3-hydroxytetradecanoyl-[acyl-carrier-protein] and UDP-N-acetyl-alpha-D-glucosamine: step 1/6. Its function is as follows. Involved in the biosynthesis of lipid A, a phosphorylated glycolipid that anchors the lipopolysaccharide to the outer membrane of the cell. This Helicobacter pylori (strain ATCC 700392 / 26695) (Campylobacter pylori) protein is Acyl-[acyl-carrier-protein]--UDP-N-acetylglucosamine O-acyltransferase.